The following is a 719-amino-acid chain: DNA replication licensing factor MCM7 (719 aa).

Alanine 2 carries the post-translational modification N-acetylalanine. Residues lysine 15 and lysine 28 each participate in a glycyl lysine isopeptide (Lys-Gly) (interchain with G-Cter in SUMO2) cross-link. Position 314 is a phosphoserine (serine 314). The region spanning 332–538 is the MCM domain; sequence FYEKLAASIA…NDLRLAQHIT (207 aa). Tyrosine 345 contributes to the ATP binding site. Residue serine 365 is modified to Phosphoserine. ATP is bound by residues glycine 384, alanine 386, lysine 387, serine 388, and asparagine 489. Position 500 is a phosphoserine (serine 500). Residues 513–516 carry the Arginine finger motif; the sequence is SRFD. Arginine 514 lines the ATP pocket. Residues 521–564 form an interaction with RAD17 region; that stretch reads IQDRPDRDNDLRLAQHITYVHQHSRQPPAQFEPLDMKLMRRYIA. Residues 577 to 719 form an interaction with ATRIP region; sequence LADYITAAYV…NTSRTRITFV (143 aa). Residue arginine 604 coordinates ATP. Serine 678 is subject to Phosphoserine.

It belongs to the MCM family. Component of the MCM2-7 complex. The complex forms a toroidal hexameric ring with the proposed subunit order MCM2-MCM6-MCM4-MCM7-MCM3-MCM5. Component of the CMG helicase complex, a hexameric ring of related MCM2-7 subunits stabilized by CDC45 and the tetrameric GINS complex. Interacts with the ATR-ATRIP complex and with RAD17. Interacts with TIPIN. Interacts with MCMBP. Interacts with ANKRD17. Component of the replisome complex composed of at least DONSON, MCM2, MCM7, PCNA and TICRR. In terms of processing, O-glycosylated (O-GlcNAcylated), in a cell cycle-dependent manner. Post-translationally, ubiquitinated by ECS(LRR1) E3 ubiquitin-protein ligase complex when forks converge following formation of DNA interstrand cross-links. During mitosis, ubiquitinated by TRAIP when forks converge following formation of DNA interstrand cross-links. Short ubiquitin chains on MCM7 promote recruitment of DNA glycosylase NEIL3. If the interstrand cross-link cannot be cleaved by NEIL3, the ubiquitin chains continue to grow on MCM7, promoting the unloading of the CMG helicase complex by the VCP/p97 ATPase.

It localises to the nucleus. It is found in the chromosome. It carries out the reaction ATP + H2O = ADP + phosphate + H(+). Functionally, acts as a component of the MCM2-7 complex (MCM complex) which is the replicative helicase essential for 'once per cell cycle' DNA replication initiation and elongation in eukaryotic cells. Core component of CDC45-MCM-GINS (CMG) helicase, the molecular machine that unwinds template DNA during replication, and around which the replisome is built. The active ATPase sites in the MCM2-7 ring are formed through the interaction surfaces of two neighboring subunits such that a critical structure of a conserved arginine finger motif is provided in trans relative to the ATP-binding site of the Walker A box of the adjacent subunit. The six ATPase active sites, however, are likely to contribute differentially to the complex helicase activity. Uncomplexed form does not show ATPase or DNA helicase. Required for S-phase checkpoint activation upon UV-induced damage. The chain is DNA replication licensing factor MCM7 (Mcm7) from Mus musculus (Mouse).